Consider the following 546-residue polypeptide: Germacrene-D synthase (546 aa).

The Mg(2+) site is built by aspartate 303, aspartate 307, aspartate 448, and glutamate 456. Residues aspartate 303–aspartate 307 carry the DDXXD motif motif.

It belongs to the terpene synthase family. Requires Mg(2+) as cofactor. Mn(2+) is required as a cofactor.

It carries out the reaction (2E,6E)-farnesyl diphosphate = (-)-germacrene D + diphosphate. It participates in secondary metabolite biosynthesis; terpenoid biosynthesis. In terms of biological role, sesquiterpene synthase that catalyzes the formation of germacrene D from trans,trans-farnesyl diphosphate (FPP). The sequence is that of Germacrene-D synthase (GDS) from Ocimum basilicum (Sweet basil).